Reading from the N-terminus, the 314-residue chain is Methionyl-tRNA formyltransferase (314 aa).

112 to 115 (SLLP) contributes to the (6S)-5,6,7,8-tetrahydrofolate binding site.

This sequence belongs to the Fmt family.

It catalyses the reaction L-methionyl-tRNA(fMet) + (6R)-10-formyltetrahydrofolate = N-formyl-L-methionyl-tRNA(fMet) + (6S)-5,6,7,8-tetrahydrofolate + H(+). Attaches a formyl group to the free amino group of methionyl-tRNA(fMet). The formyl group appears to play a dual role in the initiator identity of N-formylmethionyl-tRNA by promoting its recognition by IF2 and preventing the misappropriation of this tRNA by the elongation apparatus. This is Methionyl-tRNA formyltransferase from Aeromonas hydrophila subsp. hydrophila (strain ATCC 7966 / DSM 30187 / BCRC 13018 / CCUG 14551 / JCM 1027 / KCTC 2358 / NCIMB 9240 / NCTC 8049).